Consider the following 42-residue polypeptide: Tachystatin-B1 (42 aa).

Intrachain disulfides connect Cys4-Cys20, Cys11-Cys25, and Cys19-Cys37.

In terms of tissue distribution, granular hemocytes, small secretory granules.

It localises to the secreted. In terms of biological role, exhibits stronger antimicrobial activity against the Gram-positive bacteria (S.aureus (IC(50) is 7.4 ug/ml)) and fungi (C.albicans (IC(50) is 3.0 ug/ml) and P.pastoris (IC(50) is 0.1 ug/ml)) than Gram-negative bacteria (E.coli no inhibition at 100 ug/ml). Binds to chitin (4.3 uM are required to obtain 50% of binding). Does not cause hemolysis on sheep erythrocytes. Has no blocking activity on the P-type calcium channel. In Tachypleus tridentatus (Japanese horseshoe crab), this protein is Tachystatin-B1.